Here is a 427-residue protein sequence, read N- to C-terminus: 3-phosphoshikimate 1-carboxyvinyltransferase (427 aa).

The 3-phosphoshikimate site is built by Lys22, Ser23, and Arg27. Lys22 is a binding site for phosphoenolpyruvate. Residues Gly96 and Arg124 each coordinate phosphoenolpyruvate. Ser169, Ser170, Gln171, Ser197, Asp313, Asn336, and Lys340 together coordinate 3-phosphoshikimate. Gln171 lines the phosphoenolpyruvate pocket. Asp313 acts as the Proton acceptor in catalysis. Positions 344, 386, and 411 each coordinate phosphoenolpyruvate.

This sequence belongs to the EPSP synthase family. Monomer.

The protein resides in the cytoplasm. The catalysed reaction is 3-phosphoshikimate + phosphoenolpyruvate = 5-O-(1-carboxyvinyl)-3-phosphoshikimate + phosphate. It functions in the pathway metabolic intermediate biosynthesis; chorismate biosynthesis; chorismate from D-erythrose 4-phosphate and phosphoenolpyruvate: step 6/7. Functionally, catalyzes the transfer of the enolpyruvyl moiety of phosphoenolpyruvate (PEP) to the 5-hydroxyl of shikimate-3-phosphate (S3P) to produce enolpyruvyl shikimate-3-phosphate and inorganic phosphate. This chain is 3-phosphoshikimate 1-carboxyvinyltransferase, found in Salmonella agona (strain SL483).